The following is a 379-amino-acid chain: MSMSNSLKKLSSCVLIDLDGTLINTDGVVGDILRKYLCKYGKQWDGRESLKIVGKTPVEAATTIVEDYELPCKVDEFNSEFYPLFSAQMDKIKSLPGANRLIRHLKCHGVPVALASNSSRANIESKISYHEGWKECFSVIVGSDEVSKGKPSPDIFLEAAKRLKKDPADCLVIEDSVPGVMAGKAAGTKVIAVPSLPKQTHLYTSADEVINSLLDIRLEKWGLPPFQDWIENTLPIDPWHIGGPVIKGFGRGSKVLGIPTANLSTKDYADELVEHPSGVYFGWAGLAKRGVFKMVMSIGWNPYFNNKEKTIEPWLLHDFTEDFYGEELRLIIVGYIRPEANFSSLESLIAKIHEDREVAEKALDLPSYAKFKGDPYLTK.

S2 is modified (N-acetylserine). The active-site Nucleophile; for FMN phosphatase activity is the D17. Residues D17 and D19 each contribute to the Mg(2+) site. D19 functions as the Proton donor; for FMN phosphatase activity in the catalytic mechanism. The ATP site is built by G248, K254, T260, and N262. Mg(2+) is bound at residue T260. E312 serves as the catalytic Nucleophile; for riboflavin kinase activity. ATP is bound by residues L315, H317, and Y324. Residues R337 and F342 each coordinate FMN.

The protein in the N-terminal section; belongs to the HAD-like hydrolase superfamily. CbbY/CbbZ/Gph/YieH family. In the C-terminal section; belongs to the flavokinase family. As to quaternary structure, monomer. Mg(2+) serves as cofactor.

The catalysed reaction is riboflavin + ATP = FMN + ADP + H(+). The enzyme catalyses FMN + H2O = riboflavin + phosphate. It participates in cofactor biosynthesis; FMN biosynthesis; FMN from riboflavin (ATP route): step 1/1. In terms of biological role, bifunctional enzyme that catalyzes the hydrolysis of flavin-mononucleotide (FMN) to riboflavin (vitamin B2) and the phosphorylation of riboflavin to form (FMN) coenzyme. The protein is Bifunctional riboflavin kinase/FMN phosphatase of Arabidopsis thaliana (Mouse-ear cress).